Reading from the N-terminus, the 496-residue chain is Cytochrome P450 3A30 (496 aa).

Position 441 (Cys-441) interacts with heme.

It belongs to the cytochrome P450 family. Requires heme as cofactor. In terms of tissue distribution, highly expressed in liver and intestine. Moderate expression in gill and spleen. Low expression in kidney, brain and heart.

It localises to the endoplasmic reticulum membrane. It is found in the microsome membrane. The catalysed reaction is an organic molecule + reduced [NADPH--hemoprotein reductase] + O2 = an alcohol + oxidized [NADPH--hemoprotein reductase] + H2O + H(+). Functionally, putative steroid 6-beta-hydroxylase. The protein is Cytochrome P450 3A30 (cyp3a30) of Fundulus heteroclitus (Killifish).